A 110-amino-acid chain; its full sequence is FMRFamide-like neuropeptides 11 (110 aa).

An N-terminal signal peptide occupies residues 1–22; that stretch reads MTQFSALALLLIVFVAASFAQS. The propeptide occupies 23 to 29; that stretch reads YDDVSAE. Residues Phe40 and Phe54 each carry the phenylalanine amide modification. The tract at residues 60–85 is disordered; it reads LDEEDFAPESPLQGKRNGAPQPFVRF. Residue Gln72 is modified to Glutamine amide. Position 85 is a phenylalanine amide (Phe85). A propeptide spanning residues 88–110 is cleaved from the precursor; it reads SGQLDHMHDLLSTLQKLKFANNK.

Belongs to the FARP (FMRFamide related peptide) family. Each flp gene is expressed in a distinct set of neurons. Flp-11 is expressed in the DD, VD and DVB motor neurons, the PVC and URX interneurons, and the AUA, BAG, DA, LUA, and SAB neurons. Also expressed in head muscle, socket or sheath cells and uterine cells. Expressed exclusively in PHC sensory neurons in males. Expressed in AVK and RIS interneurons.

It is found in the secreted. In terms of biological role, FMRFamides and FMRFamide-like peptides are neuropeptides. Induces sleep-like quiescence behavior following release from RIS interneuron. Helps to sustain locomotion stop after gamma-aminobutyric acid (GABA) induces fast slowing response. Inhibits the late-stage body bend swimming frequency in animals through several receptors including frpr-3, npr-4 and npr-22. Functionally, potent inhibitor of the activity of the dissected pharyngeal myogenic muscle system. Acts as a ligand for the npr-22 receptor in vitro. Its function is as follows. Acts as a ligand for the npr-22 receptor in vitro. This is FMRFamide-like neuropeptides 11 from Caenorhabditis elegans.